The sequence spans 166 residues: Nucleotide-binding protein Dred_1927 (166 aa).

It belongs to the YajQ family.

Its function is as follows. Nucleotide-binding protein. The sequence is that of Nucleotide-binding protein Dred_1927 from Desulforamulus reducens (strain ATCC BAA-1160 / DSM 100696 / MI-1) (Desulfotomaculum reducens).